We begin with the raw amino-acid sequence, 395 residues long: Elongation factor Tu (395 aa).

The tr-type G domain maps to 10 to 205; it reads KPHVNIGTIG…VDSYIPLPPR (196 aa). Residues 19–26 are G1; sequence GHVDHGKT. Residue 19–26 coordinates GTP; that stretch reads GHVDHGKT. Thr26 contributes to the Mg(2+) binding site. The segment at 60–64 is G2; the sequence is GITIN. A G3 region spans residues 81–84; that stretch reads DCPG. GTP is bound by residues 81–85 and 136–139; these read DCPGH and NKVD. The interval 136-139 is G4; that stretch reads NKVD. The interval 174–176 is G5; that stretch reads SAT.

The protein belongs to the TRAFAC class translation factor GTPase superfamily. Classic translation factor GTPase family. EF-Tu/EF-1A subfamily. Monomer.

Its subcellular location is the cytoplasm. It carries out the reaction GTP + H2O = GDP + phosphate + H(+). Functionally, GTP hydrolase that promotes the GTP-dependent binding of aminoacyl-tRNA to the A-site of ribosomes during protein biosynthesis. This Terrimonas ferruginea (Flavobacterium ferrugineum) protein is Elongation factor Tu.